The sequence spans 282 residues: 4-diphosphocytidyl-2-C-methyl-D-erythritol kinase (282 aa).

K9 is an active-site residue. Residue 98–108 (PMGGGLGGGSS) coordinates ATP. D140 is a catalytic residue.

It belongs to the GHMP kinase family. IspE subfamily. Homodimer.

The catalysed reaction is 4-CDP-2-C-methyl-D-erythritol + ATP = 4-CDP-2-C-methyl-D-erythritol 2-phosphate + ADP + H(+). Its pathway is isoprenoid biosynthesis; isopentenyl diphosphate biosynthesis via DXP pathway; isopentenyl diphosphate from 1-deoxy-D-xylulose 5-phosphate: step 3/6. Its function is as follows. Catalyzes the phosphorylation of the position 2 hydroxy group of 4-diphosphocytidyl-2C-methyl-D-erythritol. This chain is 4-diphosphocytidyl-2-C-methyl-D-erythritol kinase, found in Salmonella agona (strain SL483).